The primary structure comprises 575 residues: Arginine--tRNA ligase (575 aa).

The 'HIGH' region motif lies at 131-141 (ANPNGPLHIGH).

This sequence belongs to the class-I aminoacyl-tRNA synthetase family.

It is found in the cytoplasm. The catalysed reaction is tRNA(Arg) + L-arginine + ATP = L-arginyl-tRNA(Arg) + AMP + diphosphate. The protein is Arginine--tRNA ligase of Methanobrevibacter smithii (strain ATCC 35061 / DSM 861 / OCM 144 / PS).